A 152-amino-acid polypeptide reads, in one-letter code: Ribosome maturation factor RimP (152 aa).

The protein belongs to the RimP family.

It localises to the cytoplasm. In terms of biological role, required for maturation of 30S ribosomal subunits. In Erwinia tasmaniensis (strain DSM 17950 / CFBP 7177 / CIP 109463 / NCPPB 4357 / Et1/99), this protein is Ribosome maturation factor RimP.